The chain runs to 311 residues: HPr kinase/phosphorylase (311 aa).

Residues H138 and K159 contribute to the active site. An ATP-binding site is contributed by 153-160; it reads GDSGIGKS. S160 provides a ligand contact to Mg(2+). The Proton acceptor; for phosphorylation activity. Proton donor; for dephosphorylation activity role is filled by D177. The important for the catalytic mechanism of both phosphorylation and dephosphorylation stretch occupies residues 201 to 210; the sequence is IEIRGVGIID. Residue E202 participates in Mg(2+) binding. Residue R243 is part of the active site. The tract at residues 264 to 269 is important for the catalytic mechanism of dephosphorylation; it reads PVKTGR.

This sequence belongs to the HPrK/P family. Homohexamer. Mg(2+) is required as a cofactor.

The enzyme catalyses [HPr protein]-L-serine + ATP = [HPr protein]-O-phospho-L-serine + ADP + H(+). It carries out the reaction [HPr protein]-O-phospho-L-serine + phosphate + H(+) = [HPr protein]-L-serine + diphosphate. Its function is as follows. Catalyzes the ATP- as well as the pyrophosphate-dependent phosphorylation of a specific serine residue in HPr, a phosphocarrier protein of the phosphoenolpyruvate-dependent sugar phosphotransferase system (PTS). HprK/P also catalyzes the pyrophosphate-producing, inorganic phosphate-dependent dephosphorylation (phosphorolysis) of seryl-phosphorylated HPr (P-Ser-HPr). The two antagonistic activities of HprK/P are regulated by several intracellular metabolites, which change their concentration in response to the absence or presence of rapidly metabolisable carbon sources (glucose, fructose, etc.) in the growth medium. Therefore, by controlling the phosphorylation state of HPr, HPrK/P is a sensor enzyme that plays a major role in the regulation of carbon metabolism and sugar transport: it mediates carbon catabolite repression (CCR), and regulates PTS-catalyzed carbohydrate uptake and inducer exclusion. The protein is HPr kinase/phosphorylase of Streptococcus pneumoniae (strain 70585).